The sequence spans 441 residues: 2-oxoisovalerate dehydrogenase subunit alpha, mitochondrial (441 aa).

The N-terminal 17 residues, Met1–Glu17, are a transit peptide targeting the mitochondrion. A thiamine diphosphate-binding site is contributed by Gln145–Arg147. K(+) is bound by residues Ser194, Thr199, and Gln200.

It belongs to the BCKDHA family. Heterotetramer of alpha and beta chains. The cofactor is thiamine diphosphate.

The protein resides in the mitochondrion matrix. It carries out the reaction N(6)-[(R)-lipoyl]-L-lysyl-[protein] + 3-methyl-2-oxobutanoate + H(+) = N(6)-[(R)-S(8)-2-methylpropanoyldihydrolipoyl]-L-lysyl-[protein] + CO2. Functionally, the branched-chain alpha-keto dehydrogenase complex catalyzes the overall conversion of alpha-keto acids to acyl-CoA and CO(2). It contains multiple copies of three enzymatic components: branched-chain alpha-keto acid decarboxylase (E1), lipoamide acyltransferase (E2) and lipoamide dehydrogenase (E3). The protein is 2-oxoisovalerate dehydrogenase subunit alpha, mitochondrial (bkdA) of Dictyostelium discoideum (Social amoeba).